Here is a 334-residue protein sequence, read N- to C-terminus: 4-hydroxy-2-methyl-3-oxo-4-farnesyl-3,4-dihydroquinoline-1-oxide ketoreductase (334 aa).

Y139 serves as the catalytic Proton donor.

The protein belongs to the 3-beta-HSD family.

It catalyses the reaction aurachin B + NAD(+) + H2O = 4-hydroxy-2-methyl-3-oxo-4-[(2E,6E)-farnesyl]-3,4-dihydroquinoline 1-oxide + NADH. It carries out the reaction 3,4-dihydroxy-2-methyl-4-[(2E,6E)-farnesyl]-3,4-dihydroquinoline 1-oxide + NAD(+) = 4-hydroxy-2-methyl-3-oxo-4-[(2E,6E)-farnesyl]-3,4-dihydroquinoline 1-oxide + NADH + H(+). In terms of biological role, ketoreductase that catalyzes the final step in the conversion of aurachin C to aurachin B. Catalyzes the reduction of 4-hydroxy-2-methyl-3-oxo-4-[(2E,6E)-farnesyl]-3,4-dihydroquinoline-1-oxide to form 3,4-dihydroxy-2-methyl-4-[(2E,6E)-farnesyl]-3,4-dihydroquinoline 1-oxide, which then undergoes a spontaneous dehydration to form aurachin B. Accepts both NADH and NADPH, but has a preference for NADH. This Stigmatella aurantiaca protein is 4-hydroxy-2-methyl-3-oxo-4-farnesyl-3,4-dihydroquinoline-1-oxide ketoreductase.